The primary structure comprises 739 residues: Transcription activator of gluconeogenesis MCYG_04674 (739 aa).

Residues 1–33 show a composition bias toward polar residues; that stretch reads MSPHQTTGQESDNMAVNGENAQASSQYIQLNSE. The disordered stretch occupies residues 1-62; that stretch reads MSPHQTTGQE…PSRPKRKKAK (62 aa). Residues 40 to 55 are compositionally biased toward basic and acidic residues; it reads AAEKKAAAAKAKDPSR. A DNA-binding region (zn(2)-C6 fungal-type) is located at residues 65-93; the sequence is CYACQRGHLTCGDERPCQRCIKRGFQDAC. Disordered stretches follow at residues 174–223, 264–308, 380–420, 537–574, and 639–668; these read GPEN…QFNS, DTPP…GDSG, SRQN…HKNA, NHNV…STTA, and AQNN…GQRR. Composition is skewed to polar residues over residues 267-284 and 397-411; these read PSDN…SSGT and PVVS…NLNI. The segment covering 547–557 has biased composition (low complexity); it reads GLLTGSTSRGS. Residues 562–574 show a composition bias toward polar residues; the sequence is PYSSDQFNSSTTA. A compositionally biased stretch (low complexity) spans 653 to 664; that stretch reads NSSSNGTTSTGR.

It belongs to the ERT1/acuK family.

The protein localises to the nucleus. Functionally, transcription factor which regulates nonfermentable carbon utilization. Activator of gluconeogenetic genes. The polypeptide is Transcription activator of gluconeogenesis MCYG_04674 (Arthroderma otae (strain ATCC MYA-4605 / CBS 113480) (Microsporum canis)).